A 297-amino-acid polypeptide reads, in one-letter code: MECPDPQPILELLEAPCPTIGQPRPEVGLRAGAGRVDIARVDGASAIVACVASSPLQLLAPSPRGRCAWIISASHGGGLLAGDEVSLEVDVGAGAVALLSTQAGTKIYRSRGEVASQGLSARVGAGALLAALPHPVSCFSGARFRQEQRFELARGASLLWLDALVAGRIARGERWAFDEYRSRIEVAIDGRTVLADALRLVPGEGPPIVARLPGVELLATVVALGPAVASAARELLERVAASPAERDAGVLAAASPLRDGLLLRVASRSVEAGLAFLRQRLAFVEAVTGADPFARTP.

This sequence belongs to the UreD family. As to quaternary structure, ureD, UreF and UreG form a complex that acts as a GTP-hydrolysis-dependent molecular chaperone, activating the urease apoprotein by helping to assemble the nickel containing metallocenter of UreC. The UreE protein probably delivers the nickel.

Its subcellular location is the cytoplasm. Its function is as follows. Required for maturation of urease via the functional incorporation of the urease nickel metallocenter. This chain is Urease accessory protein UreD, found in Anaeromyxobacter sp. (strain Fw109-5).